The sequence spans 520 residues: Cholesterol side-chain cleavage enzyme, mitochondrial (520 aa).

The N-terminal 39 residues, 1 to 39 (MLARGLALRSVLVKGCQPFLSAPRECPGHPRVGTGEGAC), are a transit peptide targeting the mitochondrion. Heme is bound at residue C461.

It belongs to the cytochrome P450 family. As to quaternary structure, interacts with FDX1/adrenodoxin. It depends on heme as a cofactor.

Its subcellular location is the mitochondrion inner membrane. It catalyses the reaction 6 reduced [adrenodoxin] + cholesterol + 3 O2 + 6 H(+) = 4-methylpentanal + pregnenolone + 6 oxidized [adrenodoxin] + 4 H2O. It carries out the reaction 2 reduced [adrenodoxin] + cholesterol + O2 + 2 H(+) = (22R)-hydroxycholesterol + 2 oxidized [adrenodoxin] + H2O. The catalysed reaction is (22R)-hydroxycholesterol + 2 reduced [adrenodoxin] + O2 + 2 H(+) = (20R,22R)-20,22-dihydroxycholesterol + 2 oxidized [adrenodoxin] + H2O. The enzyme catalyses (20R,22R)-20,22-dihydroxycholesterol + 2 reduced [adrenodoxin] + O2 + 2 H(+) = 4-methylpentanal + pregnenolone + 2 oxidized [adrenodoxin] + 2 H2O. Its pathway is lipid metabolism; C21-steroid hormone metabolism. The protein operates within steroid metabolism; cholesterol metabolism. Functionally, a cytochrome P450 monooxygenase that catalyzes the side-chain hydroxylation and cleavage of cholesterol to pregnenolone, the precursor of most steroid hormones. Catalyzes three sequential oxidation reactions of cholesterol, namely the hydroxylation at C22 followed with the hydroxylation at C20 to yield 20R,22R-hydroxycholesterol that is further cleaved between C20 and C22 to yield the C21-steroid pregnenolone and 4-methylpentanal. Mechanistically, uses molecular oxygen inserting one oxygen atom into a substrate and reducing the second into a water molecule. Two electrons are provided by NADPH via a two-protein mitochondrial transfer system comprising flavoprotein FDXR (adrenodoxin/ferredoxin reductase) and nonheme iron-sulfur protein FDX1 or FDX2 (adrenodoxin/ferredoxin). The chain is Cholesterol side-chain cleavage enzyme, mitochondrial (CYP11A1) from Sus scrofa (Pig).